Reading from the N-terminus, the 160-residue chain is NADH-quinone oxidoreductase subunit B (160 aa).

Residues Cys-39, Cys-40, Cys-104, and Cys-135 each coordinate [4Fe-4S] cluster.

This sequence belongs to the complex I 20 kDa subunit family. In terms of assembly, NDH-1 is composed of 14 different subunits. Subunits NuoB, C, D, E, F, and G constitute the peripheral sector of the complex. The cofactor is [4Fe-4S] cluster.

It is found in the cell membrane. It carries out the reaction a quinone + NADH + 5 H(+)(in) = a quinol + NAD(+) + 4 H(+)(out). Its function is as follows. NDH-1 shuttles electrons from NADH, via FMN and iron-sulfur (Fe-S) centers, to quinones in the respiratory chain. The immediate electron acceptor for the enzyme in this species is believed to be a menaquinone. Couples the redox reaction to proton translocation (for every two electrons transferred, four hydrogen ions are translocated across the cytoplasmic membrane), and thus conserves the redox energy in a proton gradient. This is NADH-quinone oxidoreductase subunit B from Amoebophilus asiaticus (strain 5a2).